We begin with the raw amino-acid sequence, 198 residues long: Endonuclease V (198 aa).

Mg(2+) is bound by residues Asp-38 and Asp-101.

Belongs to the endonuclease V family. Mg(2+) is required as a cofactor.

The protein localises to the cytoplasm. The catalysed reaction is Endonucleolytic cleavage at apurinic or apyrimidinic sites to products with a 5'-phosphate.. DNA repair enzyme involved in the repair of deaminated bases. Selectively cleaves double-stranded DNA at the second phosphodiester bond 3' to a deoxyinosine leaving behind the intact lesion on the nicked DNA. The polypeptide is Endonuclease V (Saccharolobus islandicus (strain M.14.25 / Kamchatka #1) (Sulfolobus islandicus)).